We begin with the raw amino-acid sequence, 598 residues long: Probable translation initiation factor IF-2 (598 aa).

The tr-type G domain maps to L3–E223. The G1 stretch occupies residues G12–T19. G12–T19 contributes to the GTP binding site. Residues G37–H41 are G2. The G3 stretch occupies residues D76–G79. Residues D76–H80 and N130–D133 contribute to the GTP site. Residues N130–D133 are G4. The G5 stretch occupies residues S200–M202.

The protein belongs to the TRAFAC class translation factor GTPase superfamily. Classic translation factor GTPase family. IF-2 subfamily.

In terms of biological role, function in general translation initiation by promoting the binding of the formylmethionine-tRNA to ribosomes. Seems to function along with eIF-2. The protein is Probable translation initiation factor IF-2 of Methanococcus aeolicus (strain ATCC BAA-1280 / DSM 17508 / OCM 812 / Nankai-3).